We begin with the raw amino-acid sequence, 391 residues long: GDSL esterase/lipase 22 (391 aa).

A signal peptide spans 1–29; the sequence is MMANNCNLVSVLCVILVLTLFHNPITVAG. Residue S43 is the Nucleophile of the active site. 3 N-linked (GlcNAc...) asparagine glycosylation sites follow: N105, N165, and N288. Active-site residues include D322 and H325. Residues 372–391 form a disordered region; it reads PATVHASDSSSSTSRGYEYY.

Belongs to the 'GDSL' lipolytic enzyme family. Component of the PYK10 complex, at least composed of PYK10/BGLU23, BGLU21, BGLU22, JAL22, JAL23, PBP1/JAL30, PBP2/JAL31, JAL32, JAL33, JAL34, JAL35, GLL22 and GLL23.

The protein localises to the secreted. The sequence is that of GDSL esterase/lipase 22 (GLL22) from Arabidopsis thaliana (Mouse-ear cress).